A 104-amino-acid chain; its full sequence is uncharacterized protein (104 aa).

This is an uncharacterized protein from Mycoplasma pneumoniae (strain ATCC 29342 / M129 / Subtype 1) (Mycoplasmoides pneumoniae).